A 266-amino-acid chain; its full sequence is Ras-like protein family member 12 (266 aa).

GTP contacts are provided by residues 27-34 (GRRGAGKS), 74-78 (DTADL), and 134-137 (NKLD).

This sequence belongs to the small GTPase superfamily. Ras family.

The catalysed reaction is GTP + H2O = GDP + phosphate + H(+). The protein is Ras-like protein family member 12 (RASL12) of Homo sapiens (Human).